Here is a 255-residue protein sequence, read N- to C-terminus: MKKVVKVKDITIGEGMPKICIPILGETLEEIKEEAELLSTFDFDIVEWRADFFQFVEDMDCIKLAMEIIEENLGDKPMIFTLRSLKEGGKREVCEALYFEINRRVLETKNLDILDIELFHDKDEIESLINLAHKNGAKVIISNHDFQQTPSKDEILSRMNRAAQLGADIVKIAVMANDTEDVITVLDATRILKEDYLKIPLIAIAMGKKGMITRFAGEIFGSDITFATAKKTSAPGQLSVEDVKNIVQFIHKHTI.

Residues 47–49 and Arg83 each bind 3-dehydroquinate; that span reads EWR. His144 functions as the Proton donor/acceptor in the catalytic mechanism. Lys171 acts as the Schiff-base intermediate with substrate in catalysis. Residues Arg214, Ser233, and Gln237 each coordinate 3-dehydroquinate.

The protein belongs to the type-I 3-dehydroquinase family. In terms of assembly, homodimer.

The catalysed reaction is 3-dehydroquinate = 3-dehydroshikimate + H2O. Its pathway is metabolic intermediate biosynthesis; chorismate biosynthesis; chorismate from D-erythrose 4-phosphate and phosphoenolpyruvate: step 3/7. Functionally, involved in the third step of the chorismate pathway, which leads to the biosynthesis of aromatic amino acids. Catalyzes the cis-dehydration of 3-dehydroquinate (DHQ) and introduces the first double bond of the aromatic ring to yield 3-dehydroshikimate. The chain is 3-dehydroquinate dehydratase from Alkaliphilus oremlandii (strain OhILAs) (Clostridium oremlandii (strain OhILAs)).